Consider the following 457-residue polypeptide: Endo-1,3(4)-beta-glucanase ARB_04519 (457 aa).

The signal sequence occupies residues 1-18 (MRTTGLLLLGALAELGSA). The region spanning 19–319 (TYILEDDYQP…YMKVYQQGTA (301 aa)) is the GH16 domain. Glutamate 130 serves as the catalytic Nucleophile. Glutamate 135 acts as the Proton donor in catalysis. N-linked (GlcNAc...) asparagine glycosylation is present at asparagine 200. The interval 318–397 (TAPTKPSQAP…DSCPPPTQPA (80 aa)) is disordered. Low complexity predominate over residues 333-352 (TPALPTMKSTSTVSSMVSAT). Residues 353 to 362 (QPAPTASNPT) show a composition bias toward polar residues. Low complexity predominate over residues 368-378 (PSSSSSNNGPQ).

Belongs to the glycosyl hydrolase 16 family.

It is found in the secreted. It carries out the reaction Endohydrolysis of (1-&gt;3)- or (1-&gt;4)-linkages in beta-D-glucans when the glucose residue whose reducing group is involved in the linkage to be hydrolyzed is itself substituted at C-3.. Its function is as follows. Mixed-linked glucanase involved in the degradation of complex natural cellulosic substrates. Active on laminarin. lichenan, soluble carboxymethyl cellulose but not on pustulan. The protein is Endo-1,3(4)-beta-glucanase ARB_04519 of Arthroderma benhamiae (strain ATCC MYA-4681 / CBS 112371) (Trichophyton mentagrophytes).